The primary structure comprises 385 residues: MGRWCQTVARGQRPRTSAPSRAGALLLLLLLLRSAGCWGAGEAPGALSTADPADQSVQCVPKATCPSSRPRLLWQTPTTQTLPSTTMETQFPVSEGKVDPYRSCGFSYEQDPTLRDPEAVARRWPWMVSVRANGTHICAGTIIASQWVLTVAHCLIWRDVIYSVRVGSPWIDQMTQTASDVPVLQVIMHSRYRAQRFWSWVGQANDIGLLKLKQELKYSNYVRPICLPGTDYVLKDHSRCTVTGWGLSKADGMWPQFRTIQEKEVIILNNKECDNFYHNFTKIPTLVQIIKSQMMCAEDTHREKFCYELTGEPLVCSMEGTWYLVGLVSWGAGCQKSEAPPIYLQVSSYQHWIWDCLNGQALALPAPSRTLLLALPLPLSLLAAL.

Residues 1–39 form the signal peptide; that stretch reads MGRWCQTVARGQRPRTSAPSRAGALLLLLLLLRSAGCWG. Positions 93–358 constitute a Peptidase S1 domain; that stretch reads VSEGKVDPYR…YQHWIWDCLN (266 aa). N-linked (GlcNAc...) asparagine glycosylation is present at asparagine 133. A disulfide bridge connects residues cysteine 138 and cysteine 154. Active-site charge relay system residues include histidine 153 and aspartate 206. 3 disulfides stabilise this stretch: cysteine 240–cysteine 316, cysteine 273–cysteine 296, and cysteine 306–cysteine 334. The N-linked (GlcNAc...) asparagine glycan is linked to asparagine 279. Threonine 310 (charge relay system) is an active-site residue.

The protein belongs to the peptidase S1 family. Testis specific. Differentially expressed in some breast cancer tissues.

The protein localises to the endoplasmic reticulum. Its function is as follows. May be involved in proteolysis through its threonine endopeptidase activity. The protein is Probable threonine protease PRSS50 (PRSS50) of Homo sapiens (Human).